The primary structure comprises 414 residues: MEFVKDLKTPEDYINNELKYGAHNYDPIPVVLKRAKGVFVYDVNDKRYYDFLSAYSSVNQGHCHPNILNAMINQAKNLTICSRAFFSVPLGICERYLTNLLGYDKVLMMNTGAEANETAYKLCRKWGYEVKKIPENMAKIVVCKNNFSGRTLGCISASTTKKCTSNFGPFAPQFSKVPYDDLEALEEELKDPNVCAFIVEPIQGEAGVIVPSDNYLQGVYDICKKYNVLFVADEVQTGLGRTGKLLCVHHYNVKPDVILLGKALSGGHYPISAVLANDDIMLVIKPGEHGSTYGGNPLAASICVEALNVLINEKLCENAEKLGGPFLENLKRELKDSKIVRDVRGKGLLCAIEFKNELVNVLDICLKLKENGLITRDVHDKTIRLTPPLCITKEQLDECTEIIVKTVKFFDERF.

Cysteines 154 and 163 form a disulfide. An N6-(pyridoxal phosphate)lysine modification is found at Lys262.

Belongs to the class-III pyridoxal-phosphate-dependent aminotransferase family. Homodimer. It depends on pyridoxal 5'-phosphate as a cofactor. In terms of processing, the disulfide bond between Cys-154 and Cys-163 is reduced by TRX1 which increases OAT catalytic activity.

Its subcellular location is the cytoplasm. It carries out the reaction a 2-oxocarboxylate + L-ornithine = L-glutamate 5-semialdehyde + an L-alpha-amino acid. The enzyme catalyses L-ornithine + 2-oxoglutarate = L-glutamate 5-semialdehyde + L-glutamate. The protein operates within amino-acid biosynthesis; L-proline biosynthesis; L-glutamate 5-semialdehyde from L-ornithine: step 1/1. With respect to regulation, unlike for mammalian OATs, activity is increased by TRX1-mediated reduction of the disulfide bond between Cys-154 and Cys-163. Binding to TRX1 may also induce conformational changes that facilitate substrate binding. In terms of biological role, catalyzes the transamination of alpha-ketoglutarate with ornithine or N-acetylornithine and of glutamate-5-semialdehyde with glutamate and alanine. The chain is Ornithine aminotransferase from Plasmodium yoelii yoelii.